The sequence spans 359 residues: tRNA/tmRNA (uracil-C(5))-methyltransferase (359 aa).

S-adenosyl-L-methionine-binding residues include Q183, Y211, N216, E232, and D292. Residue C317 is the Nucleophile of the active site. The active-site Proton acceptor is the E351.

The protein belongs to the class I-like SAM-binding methyltransferase superfamily. RNA M5U methyltransferase family. TrmA subfamily.

The catalysed reaction is uridine(54) in tRNA + S-adenosyl-L-methionine = 5-methyluridine(54) in tRNA + S-adenosyl-L-homocysteine + H(+). The enzyme catalyses uridine(341) in tmRNA + S-adenosyl-L-methionine = 5-methyluridine(341) in tmRNA + S-adenosyl-L-homocysteine + H(+). Functionally, dual-specificity methyltransferase that catalyzes the formation of 5-methyluridine at position 54 (m5U54) in all tRNAs, and that of position 341 (m5U341) in tmRNA (transfer-mRNA). The sequence is that of tRNA/tmRNA (uracil-C(5))-methyltransferase from Pseudomonas fluorescens (strain ATCC BAA-477 / NRRL B-23932 / Pf-5).